We begin with the raw amino-acid sequence, 759 residues long: Na(+)/H(+) exchanger beta (759 aa).

The Cytoplasmic portion of the chain corresponds to 1–14 (MPAFSCAFPGCRRD). Residues 15–34 (LLVIVLVVFVGIGLPIEASA) traverse the membrane as a helical segment. The Extracellular portion of the chain corresponds to 35 to 75 (PAYQSHGTEGSHLTNITNTKKAFPVLAVNYEHVRKPFEIAL). N-linked (GlcNAc...) asparagine glycosylation is present at Asn49. The helical transmembrane segment at 76–95 (WILLALLMKLGFHLIPRLSA) threads the bilayer. Residues 96 to 97 (VV) lie on the Cytoplasmic side of the membrane. A helical transmembrane segment spans residues 98–117 (PESCLLIVVGLLVGGLIKVI). The Extracellular segment spans residues 118–122 (GEEPP). Residues 123–142 (VLDSQLFFLCLLPPIILDAG) form a helical membrane-spanning segment. The Cytoplasmic segment spans residues 143–149 (YFLPIRP). Residues 150–169 (FTENVGTILVFAVIGTLWNA) form a helical membrane-spanning segment. The Extracellular segment spans residues 170–195 (FFMGGLLYALCQIESVGLSGVDLLAC). A helical membrane pass occupies residues 196 to 214 (LLFGSIVSAVDPVAVLAVF). Residues 215–225 (EEIHINELVHI) lie on the Cytoplasmic side of the membrane. Residues 226–244 (LVFGESLLNDAVTVVLYNL) traverse the membrane as a helical segment. Residues 245 to 261 (FEEFSKVGTVTVLDVFL) are Extracellular-facing. The chain crosses the membrane as a helical span at residues 262–282 (GVVCFFVVSLGGVLVGAIYGF). The Cytoplasmic segment spans residues 283–311 (LAAFTSRFTSHTRVIEPLFVFLYSYMAYL). A helical membrane pass occupies residues 312 to 330 (SSEMFHLSGIMALIACGVV). Residues 331–352 (MRPYVEANISHKSYTTIKYFLK) are Extracellular-facing. Asn338 is a glycosylation site (N-linked (GlcNAc...) asparagine). Residues 353-372 (MWSSVSETLIFIFLGVSTVA) traverse the membrane as a helical segment. Over 373–376 (GPHA) the chain is Cytoplasmic. The helical transmembrane segment at 377 to 398 (WNWTFVITTVILCLVSRVLGVI) threads the bilayer. Residues 399 to 446 (GLTFIINKFRIVKLTKKDQFIVAYGGLRGAIAFSLGYLLSNSHQMRNL) are Extracellular-facing. The chain crosses the membrane as a helical span at residues 447–467 (FLTAIITVIFFTVFVQGMTIR). Residues 468–759 (PLVELLAVKK…KEDDDPFMSC (292 aa)) are Cytoplasmic-facing. Phosphoserine; by PKA is present on residues Ser641 and Ser648. The interval 681-759 (FPTVHFEQPS…KEDDDPFMSC (79 aa)) is disordered. Residues 707 to 719 (VPKRPSLKADIEG) show a composition bias toward basic and acidic residues.

The protein belongs to the monovalent cation:proton antiporter 1 (CPA1) transporter (TC 2.A.36) family. In terms of processing, activated by cAMP, protein kinase A and protein kinase C.

The protein localises to the basolateral cell membrane. In terms of biological role, involved in pH regulation to eliminate acids generated by active metabolism or to counter adverse environmental conditions. Major proton extruding system driven by the inward sodium ion chemical gradient. The polypeptide is Na(+)/H(+) exchanger beta (Oncorhynchus mykiss (Rainbow trout)).